The chain runs to 1458 residues: Phospholipase B1, membrane-associated (1458 aa).

The N-terminal stretch at 1–21 (MGLRPGIFLLELLLLLGQGTP) is a signal peptide. Topologically, residues 22–1417 (QIHTSPRKST…QAEEAPEVLY (1396 aa)) are extracellular. 3 tandem repeats follow at residues 39 to 347 (ETLK…YRNS), 362 to 707 (VREG…YKNS), and 708 to 1054 (MQGH…PRNS). The segment at 39-1402 (ETLKNSPFPC…SPYLYTLRNS (1364 aa)) is 4 X 308-326 AA approximate repeats. N-linked (GlcNAc...) asparagine glycans are attached at residues Asn-173 and Asn-240. Ser-400 is an active-site residue. N-linked (GlcNAc...) asparagine glycosylation is present at Asn-493. Asp-514 is an active-site residue. N-linked (GlcNAc...) asparagine glycosylation is found at Asn-529 and Asn-590. The active site involves His-655. Residues Asn-690, Asn-783, Asn-797, Asn-809, Asn-1055, Asn-1113, Asn-1275, and Asn-1378 are each glycosylated (N-linked (GlcNAc...) asparagine). Repeat 4 spans residues 1064–1402 (IENWGSDFLC…SPYLYTLRNS (339 aa)). Residues 1403-1445 (RLLPDQAEEAPEVLYWAVPVAAGVGLVVGIIGTVVWRCRRGGR) are necessary for membrane localization. Residues 1418 to 1438 (WAVPVAAGVGLVVGIIGTVVW) traverse the membrane as a helical segment. Residues 1439–1458 (RCRRGGRREDPPMSLRTVAL) are Cytoplasmic-facing.

Belongs to the 'GDSL' lipolytic enzyme family. Phospholipase B1 subfamily. Post-translationally, undergoes proteolytic cleavage in the ileum. As to expression, expressed in the epidermis (at protein level).

The protein resides in the apical cell membrane. It carries out the reaction a 1,2-diacyl-sn-glycero-3-phosphocholine + H2O = a 1-acyl-sn-glycero-3-phosphocholine + a fatty acid + H(+). The enzyme catalyses a 1-O-alkyl-2-acyl-sn-glycero-3-phosphocholine + H2O = a 1-O-alkyl-sn-glycero-3-phosphocholine + a fatty acid + H(+). It catalyses the reaction a 1-acyl-sn-glycero-3-phosphocholine + H2O = sn-glycerol 3-phosphocholine + a fatty acid + H(+). The catalysed reaction is a triacylglycerol + H2O = a diacylglycerol + a fatty acid + H(+). It carries out the reaction 1,2-dihexadecanoyl-sn-glycero-3-phosphocholine + H2O = 1-hexadecanoyl-sn-glycero-3-phosphocholine + hexadecanoate + H(+). The enzyme catalyses 1-hexadecanoyl-2-(9Z-octadecenoyl)-sn-glycero-3-phosphocholine + H2O = 1-hexadecanoyl-sn-glycero-3-phosphocholine + (9Z)-octadecenoate + H(+). It catalyses the reaction 1,2-di-(9Z-octadecenoyl)-sn-glycero-3-phosphocholine + H2O = 1-(9Z-octadecenoyl)-sn-glycero-3-phosphocholine + (9Z)-octadecenoate + H(+). The catalysed reaction is 1-hexadecanoyl-2-(9Z,12Z-octadecadienoyl)-sn-glycero-3-phosphocholine + H2O = (9Z,12Z)-octadecadienoate + 1-hexadecanoyl-sn-glycero-3-phosphocholine + H(+). It carries out the reaction 1-hexadecanoyl-2-(9Z,12Z-octadecadienoyl)-sn-glycero-3-phosphocholine + H2O = 2-(9Z,12Z-octadecadienoyl)-sn-glycero-3-phosphocholine + hexadecanoate + H(+). The enzyme catalyses 1-hexadecanoyl-2-(9Z-octadecenoyl)-sn-glycero-3-phosphoethanolamine + H2O = 1-hexadecanoyl-sn-glycero-3-phosphoethanolamine + (9Z)-octadecenoate + H(+). It catalyses the reaction 1-hexadecanoyl-2-(9Z-octadecenoyl)-sn-glycero-3-phospho-(1'-sn-glycerol) + H2O = 1-hexadecanoyl-sn-glycero-3-phospho-(1'-sn-glycerol) + (9Z)-octadecenoate + H(+). The catalysed reaction is 1,2-dihexadecanoyl-sn-glycero-3-phosphocholine + 2 H2O = sn-glycerol 3-phosphocholine + 2 hexadecanoate + 2 H(+). It carries out the reaction 1-O-hexadecyl-2-(9Z)-octadecenoyl-sn-glycero-3-phosphocholine + H2O = 1-O-hexadecyl-sn-glycero-3-phosphocholine + (9Z)-octadecenoate + H(+). The enzyme catalyses 1-hexadecanoyl-sn-glycero-3-phosphocholine + H2O = sn-glycerol 3-phosphocholine + hexadecanoate + H(+). It catalyses the reaction 1,2,3-tri-(9Z-octadecenoyl)-glycerol + H2O = di-(9Z)-octadecenoylglycerol + (9Z)-octadecenoate + H(+). The catalysed reaction is 1-hexadecanoyl-2-(9Z)-octadecenoyl-3-octadecanoyl-sn-glycerol + H2O = 1-hexadecanoyl-2-(9Z-octadecenoyl)-sn-glycerol + octadecanoate + H(+). It carries out the reaction 1,3-dihexadecanoyl-2-(9Z-octadecenoyl)glycerol + H2O = 1,3-dihexadecanoylglycerol + (9Z)-octadecenoate + H(+). The enzyme catalyses 1,3-dihexadecanoyl-2-(9Z-octadecenoyl)glycerol + H2O = 1-hexadecanoyl-2-(9Z-octadecenoyl)-glycerol + hexadecanoate + H(+). It catalyses the reaction 1-hexadecanoyl-2-(9Z)-octadecenoyl-3-octadecanoyl-sn-glycerol + H2O = 1-hexadecanoyl-3-octadecanoyl-sn-glycerol + (9Z)-octadecenoate + H(+). The catalysed reaction is 1-hexadecanoyl-2-(9Z)-octadecenoyl-3-octadecanoyl-sn-glycerol + H2O = 2-(9Z-octadecenoyl)-3-octadecanoyl-sn-glycerol + hexadecanoate + H(+). It carries out the reaction 1-octadecanoyl-2-(9Z,12Z)-octadecadienoyl-sn-glycerol + H2O = 1-octadecanoyl-sn-glycerol + (9Z,12Z)-octadecadienoate + H(+). The enzyme catalyses 1,2-di-(9Z-octadecenoyl)-sn-glycerol + H2O = 1-(9Z-octadecenoyl)-sn-glycerol + (9Z)-octadecenoate + H(+). It catalyses the reaction 2,3-di-(9Z)-octadecenoyl-sn-glycerol + H2O = 3-(9Z-octadecenoyl)-sn-glycerol + (9Z)-octadecenoate + H(+). The catalysed reaction is 1,3-di-(9Z-octadecenoyl)-glycerol + H2O = 1-(9Z-octadecenoyl)-glycerol + (9Z)-octadecenoate + H(+). It carries out the reaction 1-(9Z-octadecenoyl)-glycerol + H2O = glycerol + (9Z)-octadecenoate + H(+). The enzyme catalyses 2-(9Z-octadecenoyl)-glycerol + H2O = glycerol + (9Z)-octadecenoate + H(+). In terms of biological role, calcium-independent membrane-associated phospholipase that catalyzes complete diacylation of phospholipids by hydrolyzing both sn-1 and sn-2 fatty acyl chains attached to the glycerol backbone (phospholipase B activity). Has dual phospholipase and lysophospholipase activities toward diacylphospholipids. Preferentially cleaves sn-2 ester bonds over sn-1 bonds. Acts as a lipase toward glycerolipid substrates. Hydrolyzes fatty acyl chains of diacylglycerols with preference for the sn-2 position and of triacylglycerols with not positional selectivity. May also hydrolyze long chain retinyl esters such as retinyl palmitate. May contribute to digestion of dietary phospholipids, glycerolipids and retinoids, facilitating lipid absorption at the brush border. The polypeptide is Phospholipase B1, membrane-associated (PLB1) (Homo sapiens (Human)).